The following is a 261-amino-acid chain: Ribosome biogenesis protein C3_06160C_A (261 aa).

The tract at residues 1–38 (MPQNEYIEQHIKKHGRRLDYEERKRKKEAREGHRVAKD) is disordered. 2 short sequence motifs (nuclear localization signal) span residues 11–18 (IKKHGRRL) and 51–58 (AKKRYAEK). Over residues 17–37 (RLDYEERKRKKEAREGHRVAK) the composition is skewed to basic and acidic residues. Positions 59 to 85 (VAMKKKIKAHQESKVKGPSTPKAEDGE) are disordered.

This sequence belongs to the eukaryotic ribosomal protein eS8 family. Ribosome biogenesis protein NSA2 subfamily. In terms of assembly, component of the pre-66S ribosomal particle. Interacts with NOP7 and RRP1. Interacts with RSA4 (via WD repeats).

The protein resides in the nucleus. It localises to the nucleolus. Functionally, involved in the biogenesis of the 60S ribosomal subunit. May play a part in the quality control of pre-60S particles. The chain is Ribosome biogenesis protein C3_06160C_A from Candida albicans (strain SC5314 / ATCC MYA-2876) (Yeast).